The primary structure comprises 396 residues: Imidazolonepropionase (396 aa).

Fe(3+) is bound by residues His-70 and His-72. Zn(2+)-binding residues include His-70 and His-72. Arg-79, Tyr-137, and His-164 together coordinate 4-imidazolone-5-propanoate. Residue Tyr-137 participates in N-formimidoyl-L-glutamate binding. His-227 lines the Fe(3+) pocket. His-227 is a binding site for Zn(2+). Gln-230 provides a ligand contact to 4-imidazolone-5-propanoate. Asp-301 provides a ligand contact to Fe(3+). Zn(2+) is bound at residue Asp-301. N-formimidoyl-L-glutamate contacts are provided by Asn-303 and Gly-305. Ser-306 contacts 4-imidazolone-5-propanoate.

Belongs to the metallo-dependent hydrolases superfamily. HutI family. Zn(2+) is required as a cofactor. Fe(3+) serves as cofactor.

The protein localises to the cytoplasm. The enzyme catalyses 4-imidazolone-5-propanoate + H2O = N-formimidoyl-L-glutamate. It participates in amino-acid degradation; L-histidine degradation into L-glutamate; N-formimidoyl-L-glutamate from L-histidine: step 3/3. Its function is as follows. Catalyzes the hydrolytic cleavage of the carbon-nitrogen bond in imidazolone-5-propanoate to yield N-formimidoyl-L-glutamate. It is the third step in the universal histidine degradation pathway. This chain is Imidazolonepropionase, found in Mycolicibacterium smegmatis (strain ATCC 700084 / mc(2)155) (Mycobacterium smegmatis).